Consider the following 225-residue polypeptide: Endonuclease V (225 aa).

2 residues coordinate Mg(2+): D43 and D110.

It belongs to the endonuclease V family. Mg(2+) serves as cofactor.

The protein resides in the cytoplasm. It carries out the reaction Endonucleolytic cleavage at apurinic or apyrimidinic sites to products with a 5'-phosphate.. DNA repair enzyme involved in the repair of deaminated bases. Selectively cleaves double-stranded DNA at the second phosphodiester bond 3' to a deoxyinosine leaving behind the intact lesion on the nicked DNA. The chain is Endonuclease V from Thermotoga sp. (strain RQ2).